Reading from the N-terminus, the 265-residue chain is Small ribosomal subunit protein uS5 (265 aa).

The span at 1–15 shows a compositional bias: low complexity; sequence MADTQPAQEAPAADA. The disordered stretch occupies residues 1-44; sequence MADTQPAQEAPAADAPRAERNFGRGRGGRGGRGRGRGGPGEEKE. A compositionally biased stretch (basic residues) spans 26–35; that stretch reads RGGRGGRGRG. The 64-residue stretch at 88–151 folds into the S5 DRBM domain; sequence LHDEMMKIYP…IAAKLNIVPV (64 aa). A disordered region spans residues 245-265; that stretch reads TEPSRDPTDEHGELLAEMTTA. The span at 246–258 shows a compositional bias: basic and acidic residues; sequence EPSRDPTDEHGEL.

It belongs to the universal ribosomal protein uS5 family.

Functionally, component of the ribosome, a large ribonucleoprotein complex responsible for the synthesis of proteins in the cell. The small ribosomal subunit (SSU) binds messenger RNAs (mRNAs) and translates the encoded message by selecting cognate aminoacyl-transfer RNA (tRNA) molecules. The large subunit (LSU) contains the ribosomal catalytic site termed the peptidyl transferase center (PTC), which catalyzes the formation of peptide bonds, thereby polymerizing the amino acids delivered by tRNAs into a polypeptide chain. The nascent polypeptides leave the ribosome through a tunnel in the LSU and interact with protein factors that function in enzymatic processing, targeting, and the membrane insertion of nascent chains at the exit of the ribosomal tunnel. Plays a role in the assembly and function of the 40S ribosomal subunit. Mutations in this protein affects the control of translational fidelity. Involved in nucleolar processing of pre-18S ribosomal RNA and ribosome assembly. The protein is Small ribosomal subunit protein uS5 of Leishmania amazonensis.